Here is a 371-residue protein sequence, read N- to C-terminus: Cysteine endopeptidase Rep1 (371 aa).

Residues 1-28 form the signal peptide; that stretch reads MGRVISSWRVLAVVAALMAMAAVELCAA. Residues 29–133 constitute a propeptide, activation peptide; that stretch reads IPFDERDLES…LPGFMYEGVR (105 aa). 3 disulfide bridges follow: C156–C198, C190–C231, and C290–C342. C159 is a catalytic residue. The N-linked (GlcNAc...) asparagine glycan is linked to N228. Active-site residues include H296 and N317.

This sequence belongs to the peptidase C1 family. In terms of tissue distribution, expressed in germinating seeds.

Its subcellular location is the protein storage vacuole. In terms of biological role, cysteine endopeptidase that digests in vitro both the acidic and basic subunits of glutelin, the major seed storage protein of rice. Acts as a negative regulator of cell death. The polypeptide is Cysteine endopeptidase Rep1 (Oryza sativa subsp. japonica (Rice)).